The chain runs to 61 residues: LECHNQQSSQPPTTKTCPGETNCYKKRWRDHRGSITERGCGCPSVKKGIEINCCTTDKCNN.

Intrachain disulfides connect C3–C23, C17–C40, C42–C53, and C54–C59.

The protein belongs to the three-finger toxin family. Short-chain subfamily. Type I alpha-neurotoxin sub-subfamily. As to expression, expressed by the venom gland.

Its subcellular location is the secreted. Its function is as follows. Binds to muscle nicotinic acetylcholine receptor (nAChR) and inhibit acetylcholine from binding to the receptor, thereby impairing neuromuscular transmission. Produces peripheral paralysis by blocking neuromuscular transmission at the postsynaptic site. Binds to the muscular nicotinic acetylcholine receptor. In Naja annulifera (Banded Egyptian cobra), this protein is Short neurotoxin 1.